We begin with the raw amino-acid sequence, 762 residues long: Subtilisin-like protease SBT3.11 (762 aa).

The first 16 residues, 1–16 (MMSSIVSWWFFWVISA), serve as a signal peptide directing secretion. Residues 17–116 (VCILKVEFNI…VTPNTFYELQ (100 aa)) constitute a propeptide, activation peptide. The region spanning 37–115 (VHIVYLGEKE…QVTPNTFYEL (79 aa)) is the Inhibitor I9 domain. The region spanning 120-609 (TFDYLGLSHS…GGLVNPNKAA (490 aa)) is the Peptidase S8 domain. D150 acts as the Charge relay system in catalysis. N-linked (GlcNAc...) asparagine glycosylation occurs at N206. The active-site Charge relay system is H226. 2 N-linked (GlcNAc...) asparagine glycosylation sites follow: N241 and N371. S540 acts as the Charge relay system in catalysis.

This sequence belongs to the peptidase S8 family.

The protein resides in the secreted. This chain is Subtilisin-like protease SBT3.11, found in Arabidopsis thaliana (Mouse-ear cress).